Consider the following 389-residue polypeptide: Cobalt-precorrin-5B C(1)-methyltransferase (389 aa).

The interval 1 to 25 (MESRADHAVPADEGHGATEPPRGRD) is disordered.

Belongs to the CbiD family.

The enzyme catalyses Co-precorrin-5B + S-adenosyl-L-methionine = Co-precorrin-6A + S-adenosyl-L-homocysteine. The protein operates within cofactor biosynthesis; adenosylcobalamin biosynthesis; cob(II)yrinate a,c-diamide from sirohydrochlorin (anaerobic route): step 6/10. Its function is as follows. Catalyzes the methylation of C-1 in cobalt-precorrin-5B to form cobalt-precorrin-6A. The polypeptide is Cobalt-precorrin-5B C(1)-methyltransferase (Nitratidesulfovibrio vulgaris (strain ATCC 29579 / DSM 644 / CCUG 34227 / NCIMB 8303 / VKM B-1760 / Hildenborough) (Desulfovibrio vulgaris)).